A 355-amino-acid polypeptide reads, in one-letter code: Chemerin-like receptor 2 (355 aa).

The Extracellular segment spans residues Met1 to Ser41. N-linked (GlcNAc...) asparagine glycosylation is present at Asn14. Residues Leu42 to Phe62 traverse the membrane as a helical segment. Residues Thr63–Thr73 lie on the Cytoplasmic side of the membrane. Residues Leu74–Ile94 traverse the membrane as a helical segment. The Extracellular segment spans residues Ser95 to Ala112. Cys110 and Cys187 form a disulfide bridge. A helical membrane pass occupies residues Asn113 to Leu133. Topologically, residues Asp134–Ser154 are cytoplasmic. A helical membrane pass occupies residues Leu155–Phe175. Topologically, residues Arg176 to Lys210 are extracellular. Residues Tyr211–Leu231 form a helical membrane-spanning segment. Residues Lys232 to Thr247 are Cytoplasmic-facing. A helical membrane pass occupies residues Ile248–Trp268. Over Glu269–Ile286 the chain is Extracellular. A helical membrane pass occupies residues Pro287–Ile307. Residues Ser308–Gln355 are Cytoplasmic-facing.

This sequence belongs to the chemokine-like receptor (CMKLR) family.

Its subcellular location is the cell membrane. Its function is as follows. Receptor for chemoattractant adipokine chemerin/RARRES2 suggesting a role for this receptor in the regulation of inflammation and energy homesotasis. Signals mainly via beta-arrestin pathway. Binding of RARRES2 activates weakly G proteins, calcium mobilization and MAPK1/MAPK3 (ERK1/2) phosphorylation too. Acts also as a receptor for TAFA1, mediates its effects on neuronal stem-cell proliferation and differentiation via the activation of ROCK/ERK and ROCK/STAT3 signaling pathway. The protein is Chemerin-like receptor 2 (CMKLR2) of Macaca fascicularis (Crab-eating macaque).